The sequence spans 504 residues: Probable cytochrome P450 513E1 (504 aa).

The helical transmembrane segment at 1 to 21 (MNLYISILILIISLIIFFKNN) threads the bilayer. A heme-binding site is contributed by Cys450.

Belongs to the cytochrome P450 family. Requires heme as cofactor.

Its subcellular location is the membrane. This Dictyostelium discoideum (Social amoeba) protein is Probable cytochrome P450 513E1 (cyp513E1).